Consider the following 290-residue polypeptide: Transposon Ty3-G Gag polyprotein (290 aa).

Residue S2 is modified to N-acetylserine. A CCHC-type zinc finger spans residues 265–282; it reads RLCFYCKKEGHRLNECRA.

It is found in the cytoplasm. Capsid protein (CA) is the structural component of the virus-like particle (VLP), forming the shell that encapsulates the retrotransposons dimeric RNA genome. Functionally, nucleocapsid protein p9 (NC) forms the nucleocore that coats the retro-elements dimeric RNA. Binds these RNAs through its zinc fingers. Promotes primer tRNA(i)-Met annealing to the multipartite primer-binding site (PBS), dimerization of Ty3 RNA and initiation of reverse transcription. The protein is Transposon Ty3-G Gag polyprotein (TY3A-G) of Saccharomyces cerevisiae (strain ATCC 204508 / S288c) (Baker's yeast).